The sequence spans 139 residues: Nuclear transcription factor Y subunit B-4 (139 aa).

Residues 8-14 (LPIANVG) mediate DNA binding. The tract at residues 35 to 46 (VQECATEFISFV) is subunit association domain (SAD). Basic and acidic residues predominate over residues 90–115 (YREAERERTEHNKGSNDSGNEKETNT). The disordered stretch occupies residues 90-139 (YREAERERTEHNKGSNDSGNEKETNTRSDVQNQSTKFIRVVEKGSSSSAR). The span at 116 to 125 (RSDVQNQSTK) shows a compositional bias: polar residues.

This sequence belongs to the NFYB/HAP3 subunit family. As to quaternary structure, heterotrimeric transcription factor composed of three components, NF-YA, NF-YB and NF-YC. NF-YB and NF-YC must interact and dimerize for NF-YA association and DNA binding. As to expression, expressed in flowers, siliques and young rosettes.

It is found in the nucleus. Its function is as follows. Component of the NF-Y/HAP transcription factor complex. The NF-Y complex stimulates the transcription of various genes by recognizing and binding to a CCAAT motif in promoters. The sequence is that of Nuclear transcription factor Y subunit B-4 (NFYB4) from Arabidopsis thaliana (Mouse-ear cress).